The following is a 150-amino-acid chain: 1,4-dihydroxy-2-naphthoyl-CoA hydrolase (150 aa).

Asp-19 is an active-site residue.

This sequence belongs to the 4-hydroxybenzoyl-CoA thioesterase family. DHNA-CoA hydrolase subfamily.

It catalyses the reaction 1,4-dihydroxy-2-naphthoyl-CoA + H2O = 1,4-dihydroxy-2-naphthoate + CoA + H(+). The protein operates within cofactor biosynthesis; phylloquinone biosynthesis. It functions in the pathway quinol/quinone metabolism; 1,4-dihydroxy-2-naphthoate biosynthesis; 1,4-dihydroxy-2-naphthoate from chorismate: step 7/7. Catalyzes the hydrolysis of 1,4-dihydroxy-2-naphthoyl-CoA (DHNA-CoA) to 1,4-dihydroxy-2-naphthoate (DHNA), a reaction involved in phylloquinone (vitamin K1) biosynthesis. This is 1,4-dihydroxy-2-naphthoyl-CoA hydrolase from Prochlorococcus marinus (strain MIT 9215).